The chain runs to 189 residues: Elongation factor P (189 aa).

Residue lysine 34 is modified to N6-(3,6-diaminohexanoyl)-5-hydroxylysine.

This sequence belongs to the elongation factor P family. Post-translationally, may be beta-lysylated on the epsilon-amino group of Lys-34 by the combined action of EpmA and EpmB, and then hydroxylated on the C5 position of the same residue by EpmC (if this protein is present). Lysylation is critical for the stimulatory effect of EF-P on peptide-bond formation. The lysylation moiety may extend toward the peptidyltransferase center and stabilize the terminal 3-CCA end of the tRNA. Hydroxylation of the C5 position on Lys-34 may allow additional potential stabilizing hydrogen-bond interactions with the P-tRNA.

The protein resides in the cytoplasm. It participates in protein biosynthesis; polypeptide chain elongation. Its function is as follows. Involved in peptide bond synthesis. Alleviates ribosome stalling that occurs when 3 or more consecutive Pro residues or the sequence PPG is present in a protein, possibly by augmenting the peptidyl transferase activity of the ribosome. Modification of Lys-34 is required for alleviation. In Legionella pneumophila (strain Paris), this protein is Elongation factor P.